Consider the following 232-residue polypeptide: Orotate phosphoribosyltransferase (232 aa).

5-phospho-alpha-D-ribose 1-diphosphate is bound by residues Arg-107, Lys-108, Lys-111, His-113, and 133–141; that span reads EDLTTAGGS. Thr-137 serves as a coordination point for orotate.

Belongs to the purine/pyrimidine phosphoribosyltransferase family. PyrE subfamily. Homodimer. The cofactor is Mg(2+).

It carries out the reaction orotidine 5'-phosphate + diphosphate = orotate + 5-phospho-alpha-D-ribose 1-diphosphate. Its pathway is pyrimidine metabolism; UMP biosynthesis via de novo pathway; UMP from orotate: step 1/2. Functionally, catalyzes the transfer of a ribosyl phosphate group from 5-phosphoribose 1-diphosphate to orotate, leading to the formation of orotidine monophosphate (OMP). The chain is Orotate phosphoribosyltransferase from Rhizobium rhizogenes (strain K84 / ATCC BAA-868) (Agrobacterium radiobacter).